Consider the following 303-residue polypeptide: Crk-like protein (303 aa).

Residues 14 to 102 enclose the SH2 domain; it reads WYMGPVSRQE…LDTTTLIEPA (89 aa). One can recognise an SH3 1 domain in the interval 123-183; it reads DNLEYVRTLY…PVPYVEKLVR (61 aa). A phosphotyrosine mark is found at Tyr127 and Tyr207. The interval 184 to 234 is disordered; sequence SSPHGKHGNRNSNSYGIPEPAHAYAQPQTTTPLPAVSGSPGAAITPLPSTQ. The SH3 2 domain occupies 235-296; the sequence is NGPVFAKAIQ…PFTHVKIFDP (62 aa).

The protein belongs to the CRK family. As to quaternary structure, interacts with tyrosine-phosphorylated EPOR and INPP5D/SHIP1. Interacts with DOCK2 and DOCK5 via its first SH3 domain. Interacts with phosphorylated CBLB and IRS4. Interacts with BCAR1/CAS and NEDD9/HEF1.

In terms of biological role, may mediate the transduction of intracellular signals. In Homo sapiens (Human), this protein is Crk-like protein (CRKL).